Consider the following 324-residue polypeptide: NAD kinase (324 aa).

Residue D89 is the Proton acceptor of the active site. NAD(+) contacts are provided by residues 89–90, R94, 163–164, D193, and 204–209; these read DG, NE, and TAYAFS.

The protein belongs to the NAD kinase family. The cofactor is a divalent metal cation.

It is found in the cytoplasm. The enzyme catalyses NAD(+) + ATP = ADP + NADP(+) + H(+). Involved in the regulation of the intracellular balance of NAD and NADP, and is a key enzyme in the biosynthesis of NADP. Catalyzes specifically the phosphorylation on 2'-hydroxyl of the adenosine moiety of NAD to yield NADP. This Nocardia farcinica (strain IFM 10152) protein is NAD kinase.